Reading from the N-terminus, the 350-residue chain is Phosphoribosylformylglycinamidine cyclo-ligase (350 aa).

Belongs to the AIR synthase family.

The protein localises to the cytoplasm. The enzyme catalyses 2-formamido-N(1)-(5-O-phospho-beta-D-ribosyl)acetamidine + ATP = 5-amino-1-(5-phospho-beta-D-ribosyl)imidazole + ADP + phosphate + H(+). It participates in purine metabolism; IMP biosynthesis via de novo pathway; 5-amino-1-(5-phospho-D-ribosyl)imidazole from N(2)-formyl-N(1)-(5-phospho-D-ribosyl)glycinamide: step 2/2. The sequence is that of Phosphoribosylformylglycinamidine cyclo-ligase from Cupriavidus pinatubonensis (strain JMP 134 / LMG 1197) (Cupriavidus necator (strain JMP 134)).